We begin with the raw amino-acid sequence, 368 residues long: Methionine import ATP-binding protein MetN (368 aa).

One can recognise an ABC transporter domain in the interval 5–260; it reads IELNNLSVQF…PKEALTKQFI (256 aa). 41–48 contacts ATP; the sequence is GYSGAGKS.

Belongs to the ABC transporter superfamily. Methionine importer (TC 3.A.1.24) family. The complex is composed of two ATP-binding proteins (MetN), two transmembrane proteins (MetI) and a solute-binding protein (MetQ).

It localises to the cell membrane. It carries out the reaction L-methionine(out) + ATP + H2O = L-methionine(in) + ADP + phosphate + H(+). The enzyme catalyses D-methionine(out) + ATP + H2O = D-methionine(in) + ADP + phosphate + H(+). Functionally, part of the ABC transporter complex MetNIQ involved in methionine import. Responsible for energy coupling to the transport system. This is Methionine import ATP-binding protein MetN from Lactococcus lactis subsp. cremoris (strain MG1363).